A 396-amino-acid polypeptide reads, in one-letter code: Phosphoglycerate kinase (396 aa).

Substrate-binding positions include 21–23 (DLN), Arg36, 59–62 (HFGR), Arg118, and Arg151. ATP contacts are provided by residues Lys201, Glu323, and 353–356 (GGDT).

The protein belongs to the phosphoglycerate kinase family. In terms of assembly, monomer.

The protein localises to the cytoplasm. It catalyses the reaction (2R)-3-phosphoglycerate + ATP = (2R)-3-phospho-glyceroyl phosphate + ADP. The protein operates within carbohydrate degradation; glycolysis; pyruvate from D-glyceraldehyde 3-phosphate: step 2/5. In Brucella melitensis biotype 1 (strain ATCC 23456 / CCUG 17765 / NCTC 10094 / 16M), this protein is Phosphoglycerate kinase.